Here is a 262-residue protein sequence, read N- to C-terminus: Type III pantothenate kinase (262 aa).

Residue 9-16 (DAGNSRIK) participates in ATP binding. Substrate-binding positions include Y96 and 103-106 (GSDR). D105 acts as the Proton acceptor in catalysis. T129 provides a ligand contact to ATP. Residue T189 participates in substrate binding.

The protein belongs to the type III pantothenate kinase family. As to quaternary structure, homodimer. Requires NH4(+) as cofactor. K(+) serves as cofactor.

The protein localises to the cytoplasm. It carries out the reaction (R)-pantothenate + ATP = (R)-4'-phosphopantothenate + ADP + H(+). It functions in the pathway cofactor biosynthesis; coenzyme A biosynthesis; CoA from (R)-pantothenate: step 1/5. Its function is as follows. Catalyzes the phosphorylation of pantothenate (Pan), the first step in CoA biosynthesis. This Burkholderia multivorans (strain ATCC 17616 / 249) protein is Type III pantothenate kinase.